The primary structure comprises 57 residues: IKWFNSEKGFGFIEVEGQDDVFVHFSAIQGEGFKCLEEGQAVSFEIVEGNRGPQAAN.

The CSD domain maps to 1-57 (IKWFNSEKGFGFIEVEGQDDVFVHFSAIQGEGFKCLEEGQAVSFEIVEGNRGPQAAN).

As to quaternary structure, homodimer.

The protein resides in the cytoplasm. Functionally, affects cell viability at low temperatures. In Sporosarcina globispora (Bacillus globisporus), this protein is Cold shock protein CspB (cspB).